A 190-amino-acid polypeptide reads, in one-letter code: (S)-2-hydroxypropylphosphonic acid epoxidase (190 aa).

One can recognise an HTH cro/C1-type domain in the interval 10–60 (KAHLEALLATRKMTLEHLQDVRHDATQVYFDGLEHLQNVAQYLAIPLSEFF). The segment at residues 20-40 (RKMTLEHLQDVRHDATQVYFD) is a DNA-binding region (H-T-H motif). Residues Arg87, Tyr95, 125 to 128 (NGGH), and Glu132 contribute to the substrate site. Fe cation contacts are provided by His128, Glu132, and His171. In terms of domain architecture, Cupin type-2 spans 128 to 176 (HGSREIVYVTRGAVRVRWVGDNDELKEDVLNEGDSIFILPNVPHSFTNH).

Belongs to the non-heme iron-dependent dioxygenase family. As to quaternary structure, homotrimer. The cofactor is Fe(2+).

It catalyses the reaction (S)-2-hydroxypropylphosphonate + H2O2 = (1R,2S)-epoxypropylphosphonate + 2 H2O. It functions in the pathway antibiotic biosynthesis; fosfomycin biosynthesis. Functionally, non-heme-dependent dioxygenase that catalyzes the oxidative epoxidation of (S)-2-hydroxypropylphosphonate into (1R,2S)-epoxypropylphosphonate, the final step in the biosynthesis of fosfomycin antibiotic. This Pseudomonas syringae protein is (S)-2-hydroxypropylphosphonic acid epoxidase (hppE).